Consider the following 222-residue polypeptide: 7-cyano-7-deazaguanine synthase (222 aa).

14 to 24 (FSGGQDSTTCL) contacts ATP. The Zn(2+) site is built by Cys192, Cys201, Cys204, and Cys207.

This sequence belongs to the QueC family. Homodimer. Zn(2+) serves as cofactor.

It carries out the reaction 7-carboxy-7-deazaguanine + NH4(+) + ATP = 7-cyano-7-deazaguanine + ADP + phosphate + H2O + H(+). It functions in the pathway purine metabolism; 7-cyano-7-deazaguanine biosynthesis. Its function is as follows. Catalyzes the ATP-dependent conversion of 7-carboxy-7-deazaguanine (CDG) to 7-cyano-7-deazaguanine (preQ(0)). In Clostridium acetobutylicum (strain ATCC 824 / DSM 792 / JCM 1419 / IAM 19013 / LMG 5710 / NBRC 13948 / NRRL B-527 / VKM B-1787 / 2291 / W), this protein is 7-cyano-7-deazaguanine synthase.